The chain runs to 229 residues: 7-cyano-7-deazaguanine synthase (229 aa).

Residue 8 to 18 (FSGGQDSTTCL) coordinates ATP. 4 residues coordinate Zn(2+): Cys-187, Cys-196, Cys-199, and Cys-202.

It belongs to the QueC family. Requires Zn(2+) as cofactor.

It carries out the reaction 7-carboxy-7-deazaguanine + NH4(+) + ATP = 7-cyano-7-deazaguanine + ADP + phosphate + H2O + H(+). The protein operates within purine metabolism; 7-cyano-7-deazaguanine biosynthesis. Its function is as follows. Catalyzes the ATP-dependent conversion of 7-carboxy-7-deazaguanine (CDG) to 7-cyano-7-deazaguanine (preQ(0)). The polypeptide is 7-cyano-7-deazaguanine synthase (Shewanella halifaxensis (strain HAW-EB4)).